Here is a 122-residue protein sequence, read N- to C-terminus: Large ribosomal subunit protein uL14 (122 aa).

The protein belongs to the universal ribosomal protein uL14 family. Part of the 50S ribosomal subunit. Forms a cluster with proteins L3 and L19. In the 70S ribosome, L14 and L19 interact and together make contacts with the 16S rRNA in bridges B5 and B8.

In terms of biological role, binds to 23S rRNA. Forms part of two intersubunit bridges in the 70S ribosome. This chain is Large ribosomal subunit protein uL14, found in Nitrosospira multiformis (strain ATCC 25196 / NCIMB 11849 / C 71).